The primary structure comprises 117 residues: V-type proton ATPase subunit G (117 aa).

The protein belongs to the V-ATPase G subunit family. V-ATPase is a heteromultimeric enzyme made up of two complexes: the ATP-hydrolytic V1 complex and the proton translocation V0 complex. The V1 complex consists of three catalytic AB heterodimers that form a heterohexamer, three peripheral stalks each consisting of EG heterodimers, one central rotor including subunits D and F, and the regulatory subunits C and H. The proton translocation complex V0 consists of the proton transport subunit a, a ring of proteolipid subunits c9c'', rotary subunit d, subunits e and f, and the accessory subunits VhaAC45 and ATP6AP2.

Functionally, subunit of the V1 complex of vacuolar(H+)-ATPase (V-ATPase), a multisubunit enzyme composed of a peripheral complex (V1) that hydrolyzes ATP and a membrane integral complex (V0) that translocates protons. V-ATPase is responsible for acidifying and maintaining the pH of intracellular compartments and in some cell types, is targeted to the plasma membrane, where it is responsible for acidifying the extracellular environment. In enterocytes, acts as part of a pHCl-2 sensory pathway which mediates Tor-dependent larval growth and metabolism in response to zinc availability. Likely acts in maintaining enterocyte lysosomal acidification which consequently promotes Tor activation at the lysosome membrane. The protein is V-type proton ATPase subunit G (Vha13) of Drosophila melanogaster (Fruit fly).